Consider the following 158-residue polypeptide: Transcription elongation factor GreA (158 aa).

The stretch at 46–66 forms a coiled coil; that stretch reads AEYEAAKERQGFIEGRISELE.

It belongs to the GreA/GreB family.

Functionally, necessary for efficient RNA polymerase transcription elongation past template-encoded arresting sites. The arresting sites in DNA have the property of trapping a certain fraction of elongating RNA polymerases that pass through, resulting in locked ternary complexes. Cleavage of the nascent transcript by cleavage factors such as GreA or GreB allows the resumption of elongation from the new 3'terminus. GreA releases sequences of 2 to 3 nucleotides. The chain is Transcription elongation factor GreA from Neisseria meningitidis serogroup A / serotype 4A (strain DSM 15465 / Z2491).